Here is a 444-residue protein sequence, read N- to C-terminus: Ribulose bisphosphate carboxylase (444 aa).

The active-site Proton acceptor is the lysine 163. A substrate-binding site is contributed by lysine 165. Residues lysine 189, aspartate 191, and glutamate 192 each coordinate Mg(2+). Lysine 189 carries the post-translational modification N6-carboxylysine. Histidine 281 (proton acceptor) is an active-site residue. Substrate is bound by residues arginine 282, histidine 314, 367–369 (SGG), and 389–392 (QLGG).

It belongs to the RuBisCO large chain family. Type III subfamily. In terms of assembly, homodecamer, consisting of five dimer units which form a ring-like pentagonal structure. This arrangement is essential for its high thermostability. In contrast to form I RuBisCO, the form III RuBisCO is composed solely of large subunits. Mg(2+) serves as cofactor.

The catalysed reaction is 2 (2R)-3-phosphoglycerate + 2 H(+) = D-ribulose 1,5-bisphosphate + CO2 + H2O. The enzyme catalyses D-ribulose 1,5-bisphosphate + O2 = 2-phosphoglycolate + (2R)-3-phosphoglycerate + 2 H(+). Its function is as follows. Catalyzes the addition of molecular CO(2) and H(2)O to ribulose 1,5-bisphosphate (RuBP), generating two molecules of 3-phosphoglycerate (3-PGA). Functions in an archaeal AMP degradation pathway, together with AMP phosphorylase and R15P isomerase. In Thermococcus kodakarensis (strain ATCC BAA-918 / JCM 12380 / KOD1) (Pyrococcus kodakaraensis (strain KOD1)), this protein is Ribulose bisphosphate carboxylase.